We begin with the raw amino-acid sequence, 215 residues long: tRNA (guanine-N(7)-)-methyltransferase (215 aa).

S-adenosyl-L-methionine is bound by residues E44, E69, D96, and D118. D118 is an active-site residue. Residues K122, D154, and 191-194 (TEYE) contribute to the substrate site.

Belongs to the class I-like SAM-binding methyltransferase superfamily. TrmB family.

It catalyses the reaction guanosine(46) in tRNA + S-adenosyl-L-methionine = N(7)-methylguanosine(46) in tRNA + S-adenosyl-L-homocysteine. The protein operates within tRNA modification; N(7)-methylguanine-tRNA biosynthesis. Functionally, catalyzes the formation of N(7)-methylguanine at position 46 (m7G46) in tRNA. The sequence is that of tRNA (guanine-N(7)-)-methyltransferase from Exiguobacterium sp. (strain ATCC BAA-1283 / AT1b).